Here is a 453-residue protein sequence, read N- to C-terminus: Growth/differentiation factor 9 (453 aa).

The first 25 residues, 1 to 25 (MALPNKFFLWFCCFAWLCFPISLDS), serve as a signal peptide directing secretion. A propeptide spanning residues 26–318 (QPSRGEAQIV…EGVRLSRHRR (293 aa)) is cleaved from the precursor. Residues Asn-106, Asn-163, Asn-236, Asn-255, and Asn-269 are each glycosylated (N-linked (GlcNAc...) asparagine). Positions 281 to 300 (SLHPKRKPSQDPDQKRGLSA) are disordered. Asn-337 carries an N-linked (GlcNAc...) asparagine glycan. 3 disulfides stabilise this stretch: Cys-352–Cys-418, Cys-381–Cys-450, and Cys-385–Cys-452.

It belongs to the TGF-beta family. As to quaternary structure, homodimer or heterodimer (Potential). But, in contrast to other members of this family, cannot be disulfide-linked. In terms of processing, phosphorylated; phosphorylation is critical for GDF9 function.

It localises to the secreted. Required for ovarian folliculogenesis. The polypeptide is Growth/differentiation factor 9 (GDF9) (Bos taurus (Bovine)).